The following is a 681-amino-acid chain: Peroxisomal acyl-coenzyme A oxidase 2 (681 aa).

Residues Met-1–Ser-28 form a disordered region. Phosphoserine is present on Ser-9. Thr-13 is modified (phosphothreonine). Basic and acidic residues predominate over residues Trp-14–Ser-28. N6-succinyllysine occurs at positions 66, 137, 303, 453, 561, and 667. Positions Pro-679–Leu-681 match the Microbody targeting signal motif.

The protein belongs to the acyl-CoA oxidase family. In terms of assembly, homodimer. It depends on FAD as a cofactor. Acetylation of Lys-667 is observed in liver mitochondria from fasted mice but not from fed mice.

It is found in the peroxisome. The enzyme catalyses (25R)-3alpha,7alpha,12alpha-trihydroxy-5beta-cholestan-26-oyl-CoA + A + H2O = (24R,25R)-3alpha,7alpha,12alpha,24-tetrahydroxy-5beta-cholestan-26-oyl-CoA + AH2. The catalysed reaction is (25S)-3alpha,7alpha,12alpha-trihydroxy-5beta-cholestan-26-oyl-CoA + O2 = (24E)-3alpha,7alpha,12alpha-trihydroxy-5beta-cholest-24-en-26-oyl-CoA + H2O2. Its function is as follows. Oxidizes the CoA esters of the bile acid intermediates di- and tri-hydroxycoprostanic acids. Capable of oxidizing short as well as long chain 2-methyl branched fatty acids. The protein is Peroxisomal acyl-coenzyme A oxidase 2 of Mus musculus (Mouse).